The primary structure comprises 457 residues: MEFDTIAAISTPPGEGAIAIIRLSGPEAIQIADRIFYAKNSLSEAESHTIHYGHIKEDGEVIEEVMVTVMRAPRTFTREDVVEINAHGGIVSVNRVLQLLLRNGANLAEPGEFTKRAFLNGRIDLSQAEAVMDLIRAKTDRAMGVAIRQMDGNLSRLIRNLRQEILDALAQVEVNIDYPEYDDVEEMTQRMLLEKTELVRASVEQLLQTASQGKILREGLATAIIGRPNVGKSSLLNQLIQEEKAIVTDIAGTTRDIIEEYVNVRGVPLRLIDTAGIRETEDIVEKIGVERSRKALADADFILLVLNQNEELTVEDEALFEAAAGHNYVVVLNKTDLETKLDINRVRELAGENPIVSTSLVNDEGLEALEEAIKALFFAGDIDAGDATYVSNVRHIALLHQALEALNGVTTGIQLGMPVDIVQIDMTRAWDLLGEITGDSVQDELLDQLFNQFCLGK.

R22, E83, and R122 together coordinate (6S)-5-formyl-5,6,7,8-tetrahydrofolate. In terms of domain architecture, TrmE-type G spans 219–378 (GLATAIIGRP…LEEAIKALFF (160 aa)). A K(+)-binding site is contributed by N229. Residues 229-234 (NVGKSS), 248-254 (TDIAGTT), and 273-276 (DTAG) contribute to the GTP site. S233 contributes to the Mg(2+) binding site. Positions 248, 250, and 253 each coordinate K(+). Position 254 (T254) interacts with Mg(2+). Residue K457 coordinates (6S)-5-formyl-5,6,7,8-tetrahydrofolate.

It belongs to the TRAFAC class TrmE-Era-EngA-EngB-Septin-like GTPase superfamily. TrmE GTPase family. In terms of assembly, homodimer. Heterotetramer of two MnmE and two MnmG subunits. K(+) is required as a cofactor.

It is found in the cytoplasm. Functionally, exhibits a very high intrinsic GTPase hydrolysis rate. Involved in the addition of a carboxymethylaminomethyl (cmnm) group at the wobble position (U34) of certain tRNAs, forming tRNA-cmnm(5)s(2)U34. The sequence is that of tRNA modification GTPase MnmE from Listeria innocua serovar 6a (strain ATCC BAA-680 / CLIP 11262).